Consider the following 433-residue polypeptide: Serine--tRNA ligase (433 aa).

Residue 235-237 coordinates L-serine; that stretch reads TSE. ATP is bound at residue 266 to 268; that stretch reads RSE. Glu-289 provides a ligand contact to L-serine. Position 353–356 (353–356) interacts with ATP; sequence EISS. Ser-388 is an L-serine binding site.

This sequence belongs to the class-II aminoacyl-tRNA synthetase family. Type-1 seryl-tRNA synthetase subfamily. As to quaternary structure, homodimer. The tRNA molecule binds across the dimer.

The protein resides in the cytoplasm. The enzyme catalyses tRNA(Ser) + L-serine + ATP = L-seryl-tRNA(Ser) + AMP + diphosphate + H(+). It catalyses the reaction tRNA(Sec) + L-serine + ATP = L-seryl-tRNA(Sec) + AMP + diphosphate + H(+). It participates in aminoacyl-tRNA biosynthesis; selenocysteinyl-tRNA(Sec) biosynthesis; L-seryl-tRNA(Sec) from L-serine and tRNA(Sec): step 1/1. Catalyzes the attachment of serine to tRNA(Ser). Is also able to aminoacylate tRNA(Sec) with serine, to form the misacylated tRNA L-seryl-tRNA(Sec), which will be further converted into selenocysteinyl-tRNA(Sec). The protein is Serine--tRNA ligase of Burkholderia lata (strain ATCC 17760 / DSM 23089 / LMG 22485 / NCIMB 9086 / R18194 / 383).